Here is a 258-residue protein sequence, read N- to C-terminus: Hydroxyacylglutathione hydrolase (258 aa).

Residues histidine 52, histidine 54, aspartate 56, histidine 57, histidine 109, aspartate 126, and histidine 164 each contribute to the Zn(2+) site.

It belongs to the metallo-beta-lactamase superfamily. Glyoxalase II family. As to quaternary structure, monomer. Zn(2+) serves as cofactor.

It catalyses the reaction an S-(2-hydroxyacyl)glutathione + H2O = a 2-hydroxy carboxylate + glutathione + H(+). It functions in the pathway secondary metabolite metabolism; methylglyoxal degradation; (R)-lactate from methylglyoxal: step 2/2. Thiolesterase that catalyzes the hydrolysis of S-D-lactoyl-glutathione to form glutathione and D-lactic acid. The chain is Hydroxyacylglutathione hydrolase from Xylella fastidiosa (strain M12).